Here is a 269-residue protein sequence, read N- to C-terminus: Serine/threonine-protein kinase ZRK7 (269 aa).

Residues F80–T269 form the Protein kinase domain. ATP contacts are provided by residues I86 to Y94 and K106. D205 serves as the catalytic Proton acceptor.

Belongs to the protein kinase superfamily. Ser/Thr protein kinase family. ZRK subfamily.

It catalyses the reaction L-seryl-[protein] + ATP = O-phospho-L-seryl-[protein] + ADP + H(+). It carries out the reaction L-threonyl-[protein] + ATP = O-phospho-L-threonyl-[protein] + ADP + H(+). In Arabidopsis thaliana (Mouse-ear cress), this protein is Serine/threonine-protein kinase ZRK7.